A 484-amino-acid chain; its full sequence is MGAYSFRVIIVGGSITGMTLAHCLDRAGIDYVILEKHKDIFAEPGISIGLMPNGSRILEQLGIYSDVHALFEGIKKIYQYMPDGYCIETDSPVNIVDRFGLPFCVIDRYQFLKVLYSKFEDKSRFHMNKKVTSICHGKSDVSVTTADGETYHGDLVVGADGVHSVVRSEMWRIGNLARPGFVTEREKSELAAEFACVFGVAKAVPGQGRWEHILRYNEDFCFMFFPASGTDVFFNVIYKLNQKYVYPDIPRFTKEEGIEVCESVGDFPVWEDVKFRDIWAQRIAFTCVPLEEHMFKNWHHRRIICVGDSVSKMSPNMGQGGNTAIESAAALTNGLRKLVTSNYPDKPSERQLSNTLETFNRNQFKRLNTVHGDARYVTRLEALDGTLKRVFARYVMGHCGDLLVGNLARIVAGGGVLDFIPLTARSGKDWPPCPWQHSWGISESIDFCKKFAVASLIVLIVVLARALDSPAGLSSGIRSSSWSF.

The N-terminal stretch at 1 to 21 is a signal peptide; that stretch reads MGAYSFRVIIVGGSITGMTLA. FAD is bound by residues glutamate 35, glycine 49, and arginine 108. The active site involves tyrosine 216. The FAD site is built by aspartate 308 and glycine 321. Residues 451-471 traverse the membrane as a helical segment; it reads FAVASLIVLIVVLARALDSPA.

This sequence belongs to the paxM FAD-dependent monooxygenase family. FAD serves as cofactor.

The protein localises to the membrane. It participates in polyketide biosynthesis. Functionally, FAD-dependent monooxygenase; part of the gene cluster that mediates the biosynthesis of aurovertins, fungal polyketides that exhibit potent inhibition of adenosine triphosphate synthase. Tha biosynthesis starts with the HR-PKS aurA that selects propionate as the starter unit; synthesizes a hexa-ene chain through the repeated functions of the KR and DH domains in the first six iterations; selectively introduces three alpha-methyl substitutions at C4, C6, and C16 using the S-adensylmethionine-dependent cMET; and shuts off KR and DH in the last three iterations to afford a 1,3,5-triketo portion that can undergo intramolecular cyclization to yield the alpha-pyrone intermediate. AurE may act as a cyclase and enhances the rate of pyrone formation and product release of aurA. The methyltransferase aurB then methylates the C17 hydroxyl group. C17 methylation is required to initiate epoxidation by the downstream monooxygenase aurC. The monooxygenase aurC and the epoxide hydrolase aurD can iteratively transform the terminal triene portion of the methylated precursor into the dioxabicyclo[3.2.1]octane scaffold of aurovertin E. Epoxidation modifications of the precursor occur in two separate steps; bis-epoxidation of the two terminal olefins takes place first, followed by another epoxidation that occurs at C7-C8 after tetrahydrofuran formation. The O-acyltransferase aurG converts aurovertin E to aurovertin A. This Calcarisporium arbuscula (Dendryphion arbuscula) protein is FAD-dependent monooxygenase aurC.